Reading from the N-terminus, the 486-residue chain is Bifunctional protein HldE (486 aa).

The interval 1 to 331 is ribokinase; that stretch reads MAEHDDGDLI…VDAVKPASGA (331 aa). 208-211 is an ATP binding site; sequence NRRE. Residue aspartate 277 is part of the active site. The segment at 357 to 486 is cytidylyltransferase; sequence FTNGCFDLLH…TTATVTRLRS (130 aa).

This sequence in the N-terminal section; belongs to the carbohydrate kinase PfkB family. In the C-terminal section; belongs to the cytidylyltransferase family. Homodimer.

The catalysed reaction is D-glycero-beta-D-manno-heptose 7-phosphate + ATP = D-glycero-beta-D-manno-heptose 1,7-bisphosphate + ADP + H(+). It carries out the reaction D-glycero-beta-D-manno-heptose 1-phosphate + ATP + H(+) = ADP-D-glycero-beta-D-manno-heptose + diphosphate. The protein operates within nucleotide-sugar biosynthesis; ADP-L-glycero-beta-D-manno-heptose biosynthesis; ADP-L-glycero-beta-D-manno-heptose from D-glycero-beta-D-manno-heptose 7-phosphate: step 1/4. It functions in the pathway nucleotide-sugar biosynthesis; ADP-L-glycero-beta-D-manno-heptose biosynthesis; ADP-L-glycero-beta-D-manno-heptose from D-glycero-beta-D-manno-heptose 7-phosphate: step 3/4. In terms of biological role, catalyzes the phosphorylation of D-glycero-D-manno-heptose 7-phosphate at the C-1 position to selectively form D-glycero-beta-D-manno-heptose-1,7-bisphosphate. Its function is as follows. Catalyzes the ADP transfer from ATP to D-glycero-beta-D-manno-heptose 1-phosphate, yielding ADP-D-glycero-beta-D-manno-heptose. This Acidiphilium cryptum (strain JF-5) protein is Bifunctional protein HldE.